The primary structure comprises 201 residues: MKFSPLVQELIDSLKCLPGVGAKSAQRMAFQLLERNRRGGSKLANTLAKAMTDIGHCQQCRNFTEEALCEICQSPKRQLSTTLCIVETPGDVIAIEQTGEFFGKYFVLMGHLSPIDGIGPDDLGLDILAKQFATGQFSEVILATNPTVEGEATAHFIAELAQQHQVNISRIAHGVPVGGELEYVDGNTLSHALSGRKSYQI.

Residues 57-72 (CQQCRNFTEEALCEIC) form a C4-type zinc finger. Residues 81–176 (TTLCIVETPG…NISRIAHGVP (96 aa)) form the Toprim domain.

This sequence belongs to the RecR family.

Its function is as follows. May play a role in DNA repair. It seems to be involved in an RecBC-independent recombinational process of DNA repair. It may act with RecF and RecO. This Colwellia psychrerythraea (strain 34H / ATCC BAA-681) (Vibrio psychroerythus) protein is Recombination protein RecR.